The sequence spans 1139 residues: GRIP and coiled-coil domain-containing protein (1139 aa).

The segment at 366–388 is disordered; the sequence is NDDSQINNNVSNKVNSPDDDPNT. The span at 369–380 shows a compositional bias: polar residues; it reads SQINNNVSNKVN. Coiled-coil stretches lie at residues 472–648 and 758–877; these read VTKL…INNE and LYIL…ETQQ. Residues 1004–1024 form a disordered region; it reads NEQENDNNNNNNNNNNNNNVE. The segment covering 1009 to 1022 has biased composition (low complexity); the sequence is DNNNNNNNNNNNNN. The stretch at 1043-1084 forms a coiled coil; sequence YKKIRKKLETYEILLNEQQEGKKKMTEEINSLKNQVKNYESI. The 52-residue stretch at 1084–1135 folds into the GRIP domain; it reads INGNYQHIIYQKNILSNFIAQIPSRIQVDDYVSVIFNSFNFSNQEIEAINIK.

The chain is GRIP and coiled-coil domain-containing protein from Plasmodium falciparum (isolate 3D7).